Consider the following 270-residue polypeptide: Bis(5'-nucleosyl)-tetraphosphatase, symmetrical (270 aa).

It belongs to the Ap4A hydrolase family.

The enzyme catalyses P(1),P(4)-bis(5'-adenosyl) tetraphosphate + H2O = 2 ADP + 2 H(+). Its function is as follows. Hydrolyzes diadenosine 5',5'''-P1,P4-tetraphosphate to yield ADP. The protein is Bis(5'-nucleosyl)-tetraphosphatase, symmetrical of Actinobacillus pleuropneumoniae serotype 3 (strain JL03).